Reading from the N-terminus, the 457-residue chain is Argininosuccinate lyase (457 aa).

The protein belongs to the lyase 1 family. Argininosuccinate lyase subfamily.

Its subcellular location is the cytoplasm. It catalyses the reaction 2-(N(omega)-L-arginino)succinate = fumarate + L-arginine. The protein operates within amino-acid biosynthesis; L-arginine biosynthesis; L-arginine from L-ornithine and carbamoyl phosphate: step 3/3. This Escherichia coli O157:H7 protein is Argininosuccinate lyase.